Consider the following 95-residue polypeptide: Small ribosomal subunit protein bS16 (95 aa).

Belongs to the bacterial ribosomal protein bS16 family.

The protein is Small ribosomal subunit protein bS16 of Thermotoga neapolitana (strain ATCC 49049 / DSM 4359 / NBRC 107923 / NS-E).